A 45-amino-acid chain; its full sequence is Large ribosomal subunit protein bL34 (45 aa).

Positions 22-45 (RMRTKSGQNVIKARRRKGRARLTV) are disordered. Basic residues predominate over residues 33–45 (KARRRKGRARLTV).

Belongs to the bacterial ribosomal protein bL34 family.

This Thermosynechococcus vestitus (strain NIES-2133 / IAM M-273 / BP-1) protein is Large ribosomal subunit protein bL34.